The following is a 206-amino-acid chain: Adenylate kinase (206 aa).

The interval 1–21 is disordered; the sequence is MSQPKILLLGAPGAGKGTQSS. 13–18 contributes to the ATP binding site; the sequence is GAGKGT. The interval 33–61 is NMP; that stretch reads TTGDALRANKDMETEHGTPREFMEAGELV. Residues Thr-34, Arg-39, 59 to 61, 84 to 87, and Gln-91 contribute to the AMP site; these read ELV and GYPR. Residues 120 to 153 form an LID region; it reads GRRMDPETGDIYHTEFNMPDDEEVRERLVQRDDD. Residues Arg-121 and 130-131 each bind ATP; that span reads IY. AMP-binding residues include Arg-150 and Arg-161. Residue Ala-189 coordinates ATP.

It belongs to the adenylate kinase family. As to quaternary structure, monomer.

The protein resides in the cytoplasm. The enzyme catalyses AMP + ATP = 2 ADP. Its pathway is purine metabolism; AMP biosynthesis via salvage pathway; AMP from ADP: step 1/1. In terms of biological role, catalyzes the reversible transfer of the terminal phosphate group between ATP and AMP. Plays an important role in cellular energy homeostasis and in adenine nucleotide metabolism. The protein is Adenylate kinase of Natronomonas pharaonis (strain ATCC 35678 / DSM 2160 / CIP 103997 / JCM 8858 / NBRC 14720 / NCIMB 2260 / Gabara) (Halobacterium pharaonis).